The primary structure comprises 191 residues: Molybdenum cofactor guanylyltransferase (191 aa).

Residues L13–G15, K26, D72, and D102 each bind GTP. D102 lines the Mg(2+) pocket.

This sequence belongs to the MobA family. As to quaternary structure, monomer. Requires Mg(2+) as cofactor.

The protein localises to the cytoplasm. It catalyses the reaction Mo-molybdopterin + GTP + H(+) = Mo-molybdopterin guanine dinucleotide + diphosphate. In terms of biological role, transfers a GMP moiety from GTP to Mo-molybdopterin (Mo-MPT) cofactor (Moco or molybdenum cofactor) to form Mo-molybdopterin guanine dinucleotide (Mo-MGD) cofactor. This Pseudomonas putida (strain ATCC 47054 / DSM 6125 / CFBP 8728 / NCIMB 11950 / KT2440) protein is Molybdenum cofactor guanylyltransferase.